Reading from the N-terminus, the 318-residue chain is Trans-prenyltransferase (318 aa).

Residues 1 to 21 (MLHLIYISIIVVLIIILISYT) form a helical membrane-spanning segment. 3 residues coordinate isopentenyl diphosphate: Lys85, Arg88, and His122. The Mg(2+) site is built by Asp129 and Asp135. Arg140 serves as a coordination point for dimethylallyl diphosphate. Residue Arg141 participates in isopentenyl diphosphate binding. Residues Lys216, Thr217, and Gln254 each coordinate dimethylallyl diphosphate.

This sequence belongs to the FPP/GGPP synthase family. Asfivirus trans-prenyltransferase subfamily. Requires Mg(2+) as cofactor.

The protein resides in the host endoplasmic reticulum. It localises to the host membrane. It carries out the reaction isopentenyl diphosphate + dimethylallyl diphosphate = (2E)-geranyl diphosphate + diphosphate. It catalyses the reaction isopentenyl diphosphate + (2E)-geranyl diphosphate = (2E,6E)-farnesyl diphosphate + diphosphate. The enzyme catalyses isopentenyl diphosphate + (2E,6E)-farnesyl diphosphate = (2E,6E,10E)-geranylgeranyl diphosphate + diphosphate. The catalysed reaction is isopentenyl diphosphate + (2E,6E,10E)-geranylgeranyl diphosphate = (2E,6E,10E,14E)-geranylfarnesyl diphosphate + diphosphate. It functions in the pathway isoprenoid biosynthesis; farnesyl diphosphate biosynthesis; farnesyl diphosphate from geranyl diphosphate and isopentenyl diphosphate: step 1/1. It participates in isoprenoid biosynthesis; geranyl diphosphate biosynthesis; geranyl diphosphate from dimethylallyl diphosphate and isopentenyl diphosphate: step 1/1. The protein operates within isoprenoid biosynthesis; geranylgeranyl diphosphate biosynthesis; geranylgeranyl diphosphate from farnesyl diphosphate and isopentenyl diphosphate: step 1/1. In terms of biological role, trans-prenyltransferase that catalyzes the sequential condensation of isopentenyl diphosphate (IPP) with different allylic diphosphates, such as dimethylallyl diphosphate (DMAPP), geranyl diphosphate (GPP), farnesyl diphosphate (FPP) and geranylgeranyl diphosphate (GGPP), farnesyl diphosphate being the best allylic substrate. This chain is Trans-prenyltransferase, found in Ornithodoros (relapsing fever ticks).